The following is a 119-amino-acid chain: Large ribosomal subunit protein uL22 (119 aa).

The protein belongs to the universal ribosomal protein uL22 family. As to quaternary structure, part of the 50S ribosomal subunit.

Its function is as follows. This protein binds specifically to 23S rRNA; its binding is stimulated by other ribosomal proteins, e.g. L4, L17, and L20. It is important during the early stages of 50S assembly. It makes multiple contacts with different domains of the 23S rRNA in the assembled 50S subunit and ribosome. In terms of biological role, the globular domain of the protein is located near the polypeptide exit tunnel on the outside of the subunit, while an extended beta-hairpin is found that lines the wall of the exit tunnel in the center of the 70S ribosome. This Microcystis aeruginosa (strain NIES-843 / IAM M-2473) protein is Large ribosomal subunit protein uL22.